The sequence spans 238 residues: Pyridoxine 5'-phosphate synthase (238 aa).

3-amino-2-oxopropyl phosphate contacts are provided by N7 and R18. H43 serves as the catalytic Proton acceptor. The 1-deoxy-D-xylulose 5-phosphate site is built by R45 and H50. E70 functions as the Proton acceptor in the catalytic mechanism. A 1-deoxy-D-xylulose 5-phosphate-binding site is contributed by T100. The Proton donor role is filled by H190. 3-amino-2-oxopropyl phosphate is bound by residues D191 and 213–214 (GH).

It belongs to the PNP synthase family. In terms of assembly, homooctamer; tetramer of dimers.

Its subcellular location is the cytoplasm. It carries out the reaction 3-amino-2-oxopropyl phosphate + 1-deoxy-D-xylulose 5-phosphate = pyridoxine 5'-phosphate + phosphate + 2 H2O + H(+). Its pathway is cofactor biosynthesis; pyridoxine 5'-phosphate biosynthesis; pyridoxine 5'-phosphate from D-erythrose 4-phosphate: step 5/5. Catalyzes the complicated ring closure reaction between the two acyclic compounds 1-deoxy-D-xylulose-5-phosphate (DXP) and 3-amino-2-oxopropyl phosphate (1-amino-acetone-3-phosphate or AAP) to form pyridoxine 5'-phosphate (PNP) and inorganic phosphate. This Parabacteroides distasonis (strain ATCC 8503 / DSM 20701 / CIP 104284 / JCM 5825 / NCTC 11152) protein is Pyridoxine 5'-phosphate synthase.